The following is a 476-amino-acid chain: Membrane-bound lytic murein transglycosylase F (476 aa).

Positions 1–16 are cleaved as a signal peptide; sequence MIKTLFIILLCGILSA. Residues 17 to 259 form a non-LT domain region; that stretch reads CQPVDIQDVD…HLNEKYFGHV (243 aa). The interval 260–476 is LT domain; the sequence is KRFDYVDTRA…VPAKSHVSAQ (217 aa). E304 is an active-site residue.

In the N-terminal section; belongs to the bacterial solute-binding protein 3 family. It in the C-terminal section; belongs to the transglycosylase Slt family.

The protein resides in the cell outer membrane. The enzyme catalyses Exolytic cleavage of the (1-&gt;4)-beta-glycosidic linkage between N-acetylmuramic acid (MurNAc) and N-acetylglucosamine (GlcNAc) residues in peptidoglycan, from either the reducing or the non-reducing ends of the peptidoglycan chains, with concomitant formation of a 1,6-anhydrobond in the MurNAc residue.. Functionally, murein-degrading enzyme that degrades murein glycan strands and insoluble, high-molecular weight murein sacculi, with the concomitant formation of a 1,6-anhydromuramoyl product. Lytic transglycosylases (LTs) play an integral role in the metabolism of the peptidoglycan (PG) sacculus. Their lytic action creates space within the PG sacculus to allow for its expansion as well as for the insertion of various structures such as secretion systems and flagella. This is Membrane-bound lytic murein transglycosylase F from Shewanella frigidimarina (strain NCIMB 400).